Reading from the N-terminus, the 113-residue chain is Tubulin alpha chain (113 aa).

E52 serves as a coordination point for GTP. Position 52 (E52) interacts with Mg(2+).

It belongs to the tubulin family. In terms of assembly, dimer of alpha and beta chains. A typical microtubule is a hollow water-filled tube with an outer diameter of 25 nm and an inner diameter of 15 nM. Alpha-beta heterodimers associate head-to-tail to form protofilaments running lengthwise along the microtubule wall with the beta-tubulin subunit facing the microtubule plus end conferring a structural polarity. Microtubules usually have 13 protofilaments but different protofilament numbers can be found in some organisms and specialized cells. Mg(2+) serves as cofactor.

Its subcellular location is the cytoplasm. The protein resides in the cytoskeleton. It carries out the reaction GTP + H2O = GDP + phosphate + H(+). Tubulin is the major constituent of microtubules, a cylinder consisting of laterally associated linear protofilaments composed of alpha- and beta-tubulin heterodimers. Microtubules grow by the addition of GTP-tubulin dimers to the microtubule end, where a stabilizing cap forms. Below the cap, tubulin dimers are in GDP-bound state, owing to GTPase activity of alpha-tubulin. The chain is Tubulin alpha chain (TUBA) from Picea abies (Norway spruce).